The sequence spans 266 residues: Undecaprenyl-diphosphatase (266 aa).

The next 8 helical transmembrane spans lie at 1–21 (MDTF…FLPI), 39–59 (QGLS…VMYF), 87–107 (WWII…KGFI), 111–131 (FRSI…LWWA), 144–164 (VGWK…IPGT), 183–203 (AAAR…AILV), 218–238 (ALGL…HYFL), and 246–266 (MTPF…FIFL).

Belongs to the UppP family.

The protein localises to the cell inner membrane. The catalysed reaction is di-trans,octa-cis-undecaprenyl diphosphate + H2O = di-trans,octa-cis-undecaprenyl phosphate + phosphate + H(+). Catalyzes the dephosphorylation of undecaprenyl diphosphate (UPP). Confers resistance to bacitracin. This Shewanella halifaxensis (strain HAW-EB4) protein is Undecaprenyl-diphosphatase.